The following is a 647-amino-acid chain: Threonine--tRNA ligase (647 aa).

The TGS domain maps to 1-61 (MIKITFPDGA…TEDGAIEIVT (61 aa)). Residues 242–540 (DHRKLGKELD…LIENYKGAFP (299 aa)) are catalytic. Zn(2+) contacts are provided by Cys-336, His-387, and His-517.

It belongs to the class-II aminoacyl-tRNA synthetase family. As to quaternary structure, homodimer. The cofactor is Zn(2+).

Its subcellular location is the cytoplasm. It carries out the reaction tRNA(Thr) + L-threonine + ATP = L-threonyl-tRNA(Thr) + AMP + diphosphate + H(+). Catalyzes the attachment of threonine to tRNA(Thr) in a two-step reaction: L-threonine is first activated by ATP to form Thr-AMP and then transferred to the acceptor end of tRNA(Thr). Also edits incorrectly charged L-seryl-tRNA(Thr). This is Threonine--tRNA ligase from Streptococcus sanguinis (strain SK36).